The sequence spans 252 residues: Tabinhibitin 9 (252 aa).

Residues Met1 to Ser23 form the signal peptide. The short motif at Arg32–Asp34 is the Cell attachment site element. Residues Tyr63–Phe207 enclose the SCP domain.

It belongs to the CRISP family. Expressed in salivary glands.

The protein resides in the secreted. Functionally, inhibits platelet aggregation induced by all agonists tested (ADP, arachidonic acid, the thromboxane A2 analog U46619, thrombin, and snake venom snaclecs (TMVA that activates platelet through GPIB, and stejnulxin that specifically acts through GPVI (GP6))). May act by competing with fibrinogen for binding to glycoprotein IIb/IIIa (ITGA2B/ITGB3). This chain is Tabinhibitin 9, found in Tabanus yao (Horsefly).